The following is a 407-amino-acid chain: Amylovoran biosynthesis glycosyltransferase AmsK (407 aa).

The protein belongs to the glycosyltransferase group 1 family. Glycosyltransferase 4 subfamily.

It participates in glycan metabolism; exopolysaccharide biosynthesis. Functionally, involved in the biosynthesis of amylovoran which functions as a virulence factor. This is Amylovoran biosynthesis glycosyltransferase AmsK (amsK) from Erwinia amylovora (Fire blight bacteria).